The chain runs to 348 residues: Trans-L-3-hydroxyproline dehydratase (348 aa).

The active-site Proton acceptor is Cys101. Residues 102–103 (GH), Asp263, and 268–269 (GS) contribute to the substrate site.

The protein belongs to the proline racemase family. As to quaternary structure, homodimer.

It carries out the reaction trans-3-hydroxy-L-proline = 1-pyrroline-2-carboxylate + H2O. Its function is as follows. Catalyzes the dehydration of trans-3-hydroxy-L-proline to delta-1-pyrroline-2-carboxylate (Pyr2C). The protein is Trans-L-3-hydroxyproline dehydratase (l3hypdh) of Xenopus tropicalis (Western clawed frog).